Consider the following 300-residue polypeptide: Delta(7)-sterol 5(6)-desaturase erg31 (300 aa).

3 helical membrane-spanning segments follow: residues 33–53, 78–98, and 117–137; these read ISLFFLTWFGGMFLYLTFASL, VLTALQNLPGMALLTVPWFLA, and YFLCSLPLFVMFSDFGIYWAH. Residues 123–248 enclose the Fatty acid hydroxylase domain; it reads PLFVMFSDFG…FTTLFDRLGN (126 aa). The short motif at 137–141 is the Histidine box-1 element; sequence HRFLH. Residues 150 to 154 carry the Histidine box-2 motif; it reads HKLHH. A helical membrane pass occupies residues 180 to 200; sequence HLFPFFFPLHKLTYLALFTFV. Positions 225–229 match the Histidine box-3 motif; sequence HNGHH.

It belongs to the sterol desaturase family. Fe cation serves as cofactor.

The protein resides in the endoplasmic reticulum membrane. The catalysed reaction is episterol + 2 Fe(II)-[cytochrome b5] + O2 + 2 H(+) = 5-dehydroepisterol + 2 Fe(III)-[cytochrome b5] + 2 H2O. It participates in steroid metabolism; ergosterol biosynthesis. C-5 sterol desaturase; part of the third module of ergosterol biosynthesis pathway that includes by the late steps of the pathway. Erg31 and erg32 catalyze the introduction of a C-5 double bond in the B ring to produce 5-dehydroepisterol. The third module or late pathway involves the ergosterol synthesis itself through consecutive reactions that mainly occur in the endoplasmic reticulum (ER) membrane. Firstly, the squalene synthase erg9 catalyzes the condensation of 2 farnesyl pyrophosphate moieties to form squalene, which is the precursor of all steroids. Secondly, squalene is converted into lanosterol by the consecutive action of the squalene epoxidase erg1 and the lanosterol synthase erg7. The lanosterol 14-alpha-demethylase erg11/cyp1 catalyzes C14-demethylation of lanosterol to produce 4,4'-dimethyl cholesta-8,14,24-triene-3-beta-ol. In the next steps, a complex process involving various demethylation, reduction and desaturation reactions catalyzed by the C-14 reductase erg24 and the C-4 demethylation complex erg25-erg26-erg27 leads to the production of zymosterol. Erg28 likely functions in the C-4 demethylation complex reaction by tethering erg26 and Erg27 to the endoplasmic reticulum or to facilitate interaction between these proteins. Then, the sterol 24-C-methyltransferase erg6 catalyzes the methyl transfer from S-adenosyl-methionine to the C-24 of zymosterol to form fecosterol. The C-8 sterol isomerase erg2 catalyzes the reaction which results in unsaturation at C-7 in the B ring of sterols and thus converts fecosterol to episterol. The sterol-C5-desaturases erg31 and erg32 then catalyze the introduction of a C-5 double bond in the B ring to produce 5-dehydroepisterol. The C-22 sterol desaturase erg5 further converts 5-dehydroepisterol into ergosta-5,7,22,24(28)-tetraen-3beta-ol by forming the C-22(23) double bond in the sterol side chain. Finally, ergosta-5,7,22,24(28)-tetraen-3beta-ol is substrate of the C-24(28) sterol reductase erg4 to produce ergosterol. In the genus Schizosaccharomyces, a second route exists between lanosterol and fecosterol, via the methylation of lanosterol to eburicol by erg6, followed by C14-demethylation by erg11/cyp1 and C4-demethylation by the demethylation complex erg25-erg26-erg27. In Schizosaccharomyces pombe (strain 972 / ATCC 24843) (Fission yeast), this protein is Delta(7)-sterol 5(6)-desaturase erg31.